The sequence spans 811 residues: Glycerol-3-phosphate acyltransferase (811 aa).

An HXXXXD motif motif is present at residues 309 to 314 (CHRSHM).

This sequence belongs to the GPAT/DAPAT family.

It is found in the cell inner membrane. The enzyme catalyses sn-glycerol 3-phosphate + an acyl-CoA = a 1-acyl-sn-glycero-3-phosphate + CoA. It functions in the pathway phospholipid metabolism; CDP-diacylglycerol biosynthesis; CDP-diacylglycerol from sn-glycerol 3-phosphate: step 1/3. This Colwellia psychrerythraea (strain 34H / ATCC BAA-681) (Vibrio psychroerythus) protein is Glycerol-3-phosphate acyltransferase.